The primary structure comprises 431 residues: Trigger factor (431 aa).

The PPIase FKBP-type domain occupies 161–246 (DDRVTIDFVG…LKKVENIVLP (86 aa)).

The protein belongs to the FKBP-type PPIase family. Tig subfamily.

The protein localises to the cytoplasm. The enzyme catalyses [protein]-peptidylproline (omega=180) = [protein]-peptidylproline (omega=0). Its function is as follows. Involved in protein export. Acts as a chaperone by maintaining the newly synthesized protein in an open conformation. Functions as a peptidyl-prolyl cis-trans isomerase. This chain is Trigger factor, found in Glaesserella parasuis serovar 5 (strain SH0165) (Haemophilus parasuis).